The chain runs to 985 residues: NAD kinase 2, chloroplastic (985 aa).

The transit peptide at 1–62 (MFLCFCPCHV…KRRLRFVIRA (62 aa)) directs the protein to the chloroplast. The segment at 335-380 (APKAEQVELFASIVSDSSKRPIYVHSKEGVWRTSAMVSRWKQYMTR) is calmodulin-binding. Disordered stretches follow at residues 389–466 (SEES…PPGN) and 548–615 (FSNG…DEAG). Composition is skewed to basic and acidic residues over residues 390–399 (EESKRREVSE) and 413–429 (VPDE…EVDS). Residues 548 to 569 (FSNGNVHASDNTNKSISDNRGN) are compositionally biased toward polar residues.

The protein belongs to the NAD kinase family. As to expression, expressed in leaves.

It localises to the plastid. The protein localises to the chloroplast. It catalyses the reaction NAD(+) + ATP = ADP + NADP(+) + H(+). Involved in chlorophyll synthesis and chloroplast protection against oxidative damage. In Arabidopsis thaliana (Mouse-ear cress), this protein is NAD kinase 2, chloroplastic (NADK2).